The sequence spans 546 residues: MAAKDIRFGEDARTRMVRGVNVLANAVKATLGPKGRNVVLEKSFGAPTITKDGVSVAKEIELADKFENMGAQMVKEVASKTNDNAGDGTTTATVLAQALIREGAKAVAAGMNPMDLKRGIDQAVKAAVVELKNISKPTTDDKAIAQVGTISANSDESIGNIIAEAMKKVGKEGVITVEEGSGLENELDVVEGMQFDRGYLSPYFINNQQSQSADLDDPFILLHDKKISNVRDLLPVLEGVAKAGKPLLIVAEEVEGEALATLVVNTIRGIVKVVAVKAPGFGDRRKAMLEDMAVLTGGTVISEEVGLALEKATIKDLGRAKKVQVSKENTTIIDGAGDSAAIESRVGQIKTQIEDTSSDYDREKLQERVAKLAGGVAVIKVGASTEIEMKEKKARVEDALHATRAAVEEGVVPGGGVALVRALVAVGDLKGANEDQTHGIQIALRAMEAPLREIVANAGEEPSVILNKVKEGTGNYGYNAANGEFGDMVEFGILDPTKVTRSALQNAASIAGLMITTEAMVADAPKKDEPALPAGGGMGGMGGMDF.

ATP contacts are provided by residues 30 to 33 (TLGP), Lys-51, 87 to 91 (DGTTT), Gly-415, 479 to 481 (NAA), and Asp-495.

This sequence belongs to the chaperonin (HSP60) family. In terms of assembly, forms a cylinder of 14 subunits composed of two heptameric rings stacked back-to-back. Interacts with the co-chaperonin GroES.

Its subcellular location is the cytoplasm. The enzyme catalyses ATP + H2O + a folded polypeptide = ADP + phosphate + an unfolded polypeptide.. Its function is as follows. Together with its co-chaperonin GroES, plays an essential role in assisting protein folding. The GroEL-GroES system forms a nano-cage that allows encapsulation of the non-native substrate proteins and provides a physical environment optimized to promote and accelerate protein folding. This chain is Chaperonin GroEL, found in Xanthomonas axonopodis pv. citri (strain 306).